The primary structure comprises 100 residues: Small ubiquitin-related modifier 1 (100 aa).

Positions Met-1–Ala-12 are enriched in basic and acidic residues. The disordered stretch occupies residues Met-1–Leu-23. Residues Ala-19–Gly-96 form the Ubiquitin-like domain. A Glycyl lysine isopeptide (Gly-Lys) (interchain with K-? in acceptor proteins) cross-link involves residue Gly-96.

The protein belongs to the ubiquitin family. SUMO subfamily. As to quaternary structure, interacts with SAE2, SCE1 and SIZ1. Covalently attached to a number of proteins.

The protein resides in the nucleus. It localises to the cytoplasm. In terms of biological role, ubiquitin-like protein which can be covalently attached to target lysines as a monomer. Does not seem to be involved in protein degradation and may function as an antagonist of ubiquitin in the degradation process. The protein is Small ubiquitin-related modifier 1 (SUMO1) of Oryza sativa subsp. japonica (Rice).